The chain runs to 188 residues: Photosystem I assembly protein Ycf4 (188 aa).

2 helical membrane-spanning segments follow: residues 26–46 and 70–90; these read YFWA…GLSS and LLFY…SLLW.

It belongs to the Ycf4 family.

It is found in the cellular thylakoid membrane. In terms of biological role, seems to be required for the assembly of the photosystem I complex. This chain is Photosystem I assembly protein Ycf4, found in Microcystis aeruginosa (strain NIES-843 / IAM M-2473).